The sequence spans 59 residues: Large ribosomal subunit protein uL30 (59 aa).

This sequence belongs to the universal ribosomal protein uL30 family. Part of the 50S ribosomal subunit.

This chain is Large ribosomal subunit protein uL30, found in Shewanella amazonensis (strain ATCC BAA-1098 / SB2B).